A 111-amino-acid polypeptide reads, in one-letter code: Small ribosomal subunit protein uS10 (111 aa).

Belongs to the universal ribosomal protein uS10 family. In terms of assembly, part of the 30S ribosomal subunit.

Involved in the binding of tRNA to the ribosomes. The sequence is that of Small ribosomal subunit protein uS10 from Xanthomonas euvesicatoria pv. vesicatoria (strain 85-10) (Xanthomonas campestris pv. vesicatoria).